Here is a 527-residue protein sequence, read N- to C-terminus: MKALFSVLCLVLLVSILRAAVTKPDSGIFTGCLRNRTSLENPITDAIFTSRNTTTFLSSYVSYTKNKRYSSLNYQKLVAIVAAKHVSHVQATVVCAKANGIQLRIRSGGHDYEGLSYTSSVPFVILDMYNLRSITVDVSSKKAWVQAGATLGELYTKINEASQTLAFPAGVCPTVGVGGHITGGGFGNLMRKFGITVDHVIDAQLIGVNGKLLDRATMGEDLFWAIRGGGGASFGVILSWKINLVEVPKILTVFKVSKTLEQGGTDVLYKWQLVATKVPEDLFIRAWPQIVKGTKLGERTIGVVFFAQFLGPTDKLMEIMSQSLPELGLRREDCHEMSWFNTTLFWANYPVGTPTRVLLDRPSTPGEFFKSKSDNIKKPIPKEGLEKIWKTMLKFNFVWIEFNPYGGVMDRIPATATAFPHRKGNLFNLQYSTIWLDAKETENKLTMMKELYEVAGPYVSSNPREALFNFRDFDIGINPSGLNVDEAKIYGYKYFLGNLKRLMDVKAKCDPDNFFKNEQSILPARVM.

The signal sequence occupies residues 1–19 (MKALFSVLCLVLLVSILRA). A disulfide bridge connects residues C32 and C95. N-linked (GlcNAc...) asparagine glycosylation is found at N35 and N52. The FAD-binding PCMH-type domain maps to 73–247 (NYQKLVAIVA…LSWKINLVEV (175 aa)). Residues 110 to 172 (HDYEGLSYTS…QTLAFPAGVC (63 aa)) constitute a cross-link (6-(S-cysteinyl)-8alpha-(pros-histidyl)-FAD (His-Cys)). The N-linked (GlcNAc...) asparagine glycan is linked to N341.

It belongs to the oxygen-dependent FAD-linked oxidoreductase family. FAD is required as a cofactor. In terms of processing, the FAD cofactor is bound via a bicovalent 6-S-cysteinyl, 8alpha-N1-histidyl FAD linkage.

Its subcellular location is the secreted. It is found in the cell wall. Probable flavin-dependent oxidoreductase. This Arabidopsis thaliana (Mouse-ear cress) protein is Berberine bridge enzyme-like 5.